The following is a 501-amino-acid chain: Symplectin (501 aa).

Residues 20–287 (PKTDMETREE…SKLLVAEILP (268 aa)) form the CN hydrolase domain. The Proton acceptor role is filled by Glu-60. Lys-163 acts as the Proton donor in catalysis. Catalysis depends on Cys-196, which acts as the Nucleophile. An S-(coelenterazin-3a-yl)cysteine modification is found at Cys-390.

This sequence belongs to the carbon-nitrogen hydrolase superfamily. BTD/VNN family. In terms of tissue distribution, photogenic gland (at protein level).

Its function is as follows. Monovalent ion-dependent bioluminescence photoprotein. Displays an emission peak at 470 nm (blue light). Trace amounts of monovalent ion trigger the intramolecular oxidation of the chromophore, didehydrocoelenterazine, with the emission of light. The chain is Symplectin from Sthenoteuthis oualaniensis (Purpleback flying squid).